The following is a 185-amino-acid chain: Cuticle protein 18.6, isoform A (185 aa).

7 consecutive repeat copies span residues 21–24, 33–36, 41–44, 54–57, 133–136, 139–142, and 150–153. Residues 64 to 134 form the Chitin-binding type R&amp;R domain; that stretch reads HPQYSFAYNV…KEAGAHPAAA (71 aa).

Functionally, component of the cuticle of migratory locust which contains more than 100 different structural proteins. This Locusta migratoria (Migratory locust) protein is Cuticle protein 18.6, isoform A.